A 396-amino-acid polypeptide reads, in one-letter code: Probable arginine kinase F46H5.3 (396 aa).

Positions 47–129 constitute a Phosphagen kinase N-terminal domain; sequence KIEEGYAKLQ…FDPLIQDYHN (83 aa). 102–106 serves as a coordination point for substrate; the sequence is GVGVY. Positions 159 to 396 constitute a Phosphagen kinase C-terminal domain; that stretch reads FINSTRIRCG…AHLIALEKAA (238 aa). Residues 162–166 and His226 each bind ATP; that span reads STRIR. Residue Glu266 coordinates substrate. Arg270 lines the ATP pocket. Cys312 serves as a coordination point for substrate. Residues 321-325, 349-354, and Asp364 each bind ATP; these read RASVH and RGIHGE. Substrate is bound at residue Glu354.

The protein belongs to the ATP:guanido phosphotransferase family.

It catalyses the reaction L-arginine + ATP = N(omega)-phospho-L-arginine + ADP + H(+). The polypeptide is Probable arginine kinase F46H5.3 (Caenorhabditis elegans).